We begin with the raw amino-acid sequence, 892 residues long: DNA mismatch repair protein MutS (892 aa).

Position 607-614 (607-614 (GPNMSGKS)) interacts with ATP.

This sequence belongs to the DNA mismatch repair MutS family.

Functionally, this protein is involved in the repair of mismatches in DNA. It is possible that it carries out the mismatch recognition step. This protein has a weak ATPase activity. In Bacillus cereus (strain G9842), this protein is DNA mismatch repair protein MutS.